The following is a 162-amino-acid chain: Cyanate hydratase (162 aa).

Residues R103, E106, and S129 contribute to the active site.

The protein belongs to the cyanase family.

The catalysed reaction is cyanate + hydrogencarbonate + 3 H(+) = NH4(+) + 2 CO2. Its function is as follows. Catalyzes the reaction of cyanate with bicarbonate to produce ammonia and carbon dioxide. The sequence is that of Cyanate hydratase from Phaeosphaeria nodorum (strain SN15 / ATCC MYA-4574 / FGSC 10173) (Glume blotch fungus).